Reading from the N-terminus, the 173-residue chain is Protein GrpE (173 aa).

Over residues 1–28 (MTEEEKTKSEAEEIEQNNKEEEQEKSVE) the composition is skewed to basic and acidic residues. The disordered stretch occupies residues 1–30 (MTEEEKTKSEAEEIEQNNKEEEQEKSVEEL).

Belongs to the GrpE family. Homodimer.

It localises to the cytoplasm. Its function is as follows. Participates actively in the response to hyperosmotic and heat shock by preventing the aggregation of stress-denatured proteins, in association with DnaK and GrpE. It is the nucleotide exchange factor for DnaK and may function as a thermosensor. Unfolded proteins bind initially to DnaJ; upon interaction with the DnaJ-bound protein, DnaK hydrolyzes its bound ATP, resulting in the formation of a stable complex. GrpE releases ADP from DnaK; ATP binding to DnaK triggers the release of the substrate protein, thus completing the reaction cycle. Several rounds of ATP-dependent interactions between DnaJ, DnaK and GrpE are required for fully efficient folding. In Methanosphaera stadtmanae (strain ATCC 43021 / DSM 3091 / JCM 11832 / MCB-3), this protein is Protein GrpE.